The sequence spans 545 residues: Chaperonin GroEL 2 (545 aa).

ATP contacts are provided by residues 29-32 (TLGP), 86-90 (DGTTT), glycine 413, 477-479 (DAA), and aspartate 493. The tract at residues 526–545 (PEPAAAGHGHGHGHQHGPGF) is disordered. Basic residues predominate over residues 534–545 (GHGHGHQHGPGF).

This sequence belongs to the chaperonin (HSP60) family. As to quaternary structure, forms a cylinder of 14 subunits composed of two heptameric rings stacked back-to-back. Interacts with the co-chaperonin GroES.

The protein resides in the cytoplasm. The enzyme catalyses ATP + H2O + a folded polypeptide = ADP + phosphate + an unfolded polypeptide.. In terms of biological role, together with its co-chaperonin GroES, plays an essential role in assisting protein folding. The GroEL-GroES system forms a nano-cage that allows encapsulation of the non-native substrate proteins and provides a physical environment optimized to promote and accelerate protein folding. In Salinispora arenicola (strain CNS-205), this protein is Chaperonin GroEL 2.